The sequence spans 228 residues: Ribonuclease 3 (228 aa).

The RNase III domain maps to 5 to 127 (LTALQERLKH…LIGAVYLDAG (123 aa)). A Mg(2+)-binding site is contributed by Glu-40. Asp-44 is an active-site residue. Asp-113 and Glu-116 together coordinate Mg(2+). Glu-116 is a catalytic residue. The DRBM domain occupies 154 to 224 (DPKTELQEWL…AAAMLIRLKA (71 aa)).

Belongs to the ribonuclease III family. As to quaternary structure, homodimer. Requires Mg(2+) as cofactor.

It localises to the cytoplasm. The enzyme catalyses Endonucleolytic cleavage to 5'-phosphomonoester.. In terms of biological role, digests double-stranded RNA. Involved in the processing of primary rRNA transcript to yield the immediate precursors to the large and small rRNAs (23S and 16S). Processes some mRNAs, and tRNAs when they are encoded in the rRNA operon. Processes pre-crRNA and tracrRNA of type II CRISPR loci if present in the organism. The chain is Ribonuclease 3 from Variovorax paradoxus (strain S110).